The following is a 500-amino-acid chain: Probable glycine dehydrogenase (decarboxylating) subunit 2 (500 aa).

Residues 1 to 25 are disordered; the sequence is MLIFEHSRPGRRNYSQSPKAAEATD. Residue Lys263 is modified to N6-(pyridoxal phosphate)lysine.

The protein belongs to the GcvP family. C-terminal subunit subfamily. The glycine cleavage system is composed of four proteins: P, T, L and H. In this organism, the P 'protein' is a heterodimer of two subunits. Requires pyridoxal 5'-phosphate as cofactor.

It carries out the reaction N(6)-[(R)-lipoyl]-L-lysyl-[glycine-cleavage complex H protein] + glycine + H(+) = N(6)-[(R)-S(8)-aminomethyldihydrolipoyl]-L-lysyl-[glycine-cleavage complex H protein] + CO2. In terms of biological role, the glycine cleavage system catalyzes the degradation of glycine. The P protein binds the alpha-amino group of glycine through its pyridoxal phosphate cofactor; CO(2) is released and the remaining methylamine moiety is then transferred to the lipoamide cofactor of the H protein. This is Probable glycine dehydrogenase (decarboxylating) subunit 2 from Nitrosospira multiformis (strain ATCC 25196 / NCIMB 11849 / C 71).